A 148-amino-acid polypeptide reads, in one-letter code: Transcriptional regulator MraZ (148 aa).

2 SpoVT-AbrB domains span residues 5-51 (VATV…PLPE) and 80-123 (AHDI…NEAR).

It belongs to the MraZ family. As to quaternary structure, forms oligomers.

Its subcellular location is the cytoplasm. It localises to the nucleoid. The chain is Transcriptional regulator MraZ from Thiobacillus denitrificans (strain ATCC 25259 / T1).